We begin with the raw amino-acid sequence, 269 residues long: Hydroxyethylthiazole kinase (269 aa).

M42 is a substrate binding site. ATP-binding residues include R118 and S164. G191 serves as a coordination point for substrate.

The protein belongs to the Thz kinase family. Requires Mg(2+) as cofactor.

It catalyses the reaction 5-(2-hydroxyethyl)-4-methylthiazole + ATP = 4-methyl-5-(2-phosphooxyethyl)-thiazole + ADP + H(+). Its pathway is cofactor biosynthesis; thiamine diphosphate biosynthesis; 4-methyl-5-(2-phosphoethyl)-thiazole from 5-(2-hydroxyethyl)-4-methylthiazole: step 1/1. In terms of biological role, catalyzes the phosphorylation of the hydroxyl group of 4-methyl-5-beta-hydroxyethylthiazole (THZ). This chain is Hydroxyethylthiazole kinase, found in Listeria monocytogenes serotype 4b (strain F2365).